Here is a 1849-residue protein sequence, read N- to C-terminus: NADH-ubiquinone oxidoreductase chain 5 (1849 aa).

41 consecutive transmembrane segments (helical) span residues 76 to 93 (YLLL…TVCY), 98 to 120 (LILL…YLQY), 190 to 212 (YWLC…IIGW), 222 to 244 (LVPT…IYLY), 279 to 301 (HLLT…ILSS), 316 to 338 (LALQ…ILCY), 358 to 380 (LEII…ILSV), 390 to 412 (VIIL…TILI), 419 to 441 (IAVY…IWLL), 483 to 505 (LLDA…CLGV), 510 to 532 (LFIA…LQVV), 536 to 558 (ISYI…VYSI), 565 to 587 (LIMY…IHTI), 621 to 640 (IWLI…STLV), 683 to 705 (WVRF…YVQF), 718 to 740 (LTRI…QGIL), 745 to 767 (IISY…LTIL), 797 to 819 (PTWV…LVTV), 868 to 890 (ILLL…LLSL), 905 to 927 (LTVQ…YIVL), 966 to 988 (LYSY…SLLE), 1008 to 1030 (PDLL…ELLL), 1073 to 1095 (LTVV…QILF), 1105 to 1127 (LATI…LSYL), 1172 to 1194 (TYLL…IYII), 1219 to 1241 (VYFL…FFYH), 1248 to 1270 (GIFY…TLYY), 1296 to 1318 (IITF…AIIL), 1330 to 1352 (FAYN…IVSY), 1357 to 1379 (MIIF…YARI), 1418 to 1440 (LFAL…FDFT), 1444 to 1466 (VIVF…FVWL), 1478 to 1500 (ALIH…APIL), 1504 to 1526 (VYTL…ILAT), 1533 to 1555 (KAVA…FLAF), 1559 to 1581 (LIYL…YIVH), 1602 to 1624 (IAIY…GFFA), 1639 to 1661 (VATF…LYRI), 1719 to 1741 (LLHL…LVTG), 1773 to 1795 (VRNI…TAIN), and 1802 to 1824 (IIYL…HYFL).

It belongs to the complex I subunit 5 family.

It is found in the hydrogenosome membrane. It carries out the reaction a ubiquinone + NADH + 5 H(+)(in) = a ubiquinol + NAD(+) + 4 H(+)(out). This chain is NADH-ubiquinone oxidoreductase chain 5 (nad5), found in Nyctotherus ovalis.